The sequence spans 73 residues: MSLELLSQLETKIQATLENIELLKMELDEEKQKNEALLSQQQELTQKNQQLQQDLNSWSDKVNGLVGLLNNEI.

Residues 3–66 adopt a coiled-coil conformation; sequence LELLSQLETK…SWSDKVNGLV (64 aa).

It belongs to the ZapB family. As to quaternary structure, homodimer. The ends of the coiled-coil dimer bind to each other, forming polymers. Interacts with FtsZ.

The protein resides in the cytoplasm. Functionally, non-essential, abundant cell division factor that is required for proper Z-ring formation. It is recruited early to the divisome by direct interaction with FtsZ, stimulating Z-ring assembly and thereby promoting cell division earlier in the cell cycle. Its recruitment to the Z-ring requires functional FtsA or ZipA. In Shewanella frigidimarina (strain NCIMB 400), this protein is Cell division protein ZapB.